Here is a 1349-residue protein sequence, read N- to C-terminus: Indole-3-acetaldehyde oxidase (1349 aa).

A 2Fe-2S ferredoxin-type domain is found at 7-94 (AAVVLAVNGK…RCSVTTSEGI (88 aa)). [2Fe-2S] cluster-binding residues include Cys-46, Cys-51, and Cys-54. The 179-residue stretch at 237–415 (VPVSDDGWYR…LSIFIPEWGS (179 aa)) folds into the FAD-binding PCMH-type domain.

It belongs to the xanthine dehydrogenase family. Aldehyde oxidases (AO) are homodimers and heterodimers of AO subunits. The cofactor is [2Fe-2S] cluster. FAD serves as cofactor. Requires Mo-molybdopterin as cofactor. In terms of tissue distribution, mostly expressed in coleoptiles, and, to a lower extent, in mesocotyl and roots.

The protein resides in the cytoplasm. The catalysed reaction is indole-3-acetaldehyde + O2 + H2O = (indol-3-yl)acetate + H2O2 + H(+). Its function is as follows. In higher plants aldehyde oxidases (AO) appear to be homo- and heterodimeric assemblies of AO subunits with probably different physiological functions. Involved in the biosynthesis of auxin. This is Indole-3-acetaldehyde oxidase (AO2) from Zea mays (Maize).